Consider the following 528-residue polypeptide: Phosphoenolpyruvate carboxykinase (ATP) (528 aa).

Substrate-binding residues include Arg56, Tyr192, and Lys198. ATP-binding positions include Lys198, His217, and 233 to 241 (GLSGTGKTT). Residues Lys198 and His217 each coordinate Mn(2+). Asp254 is a binding site for Mn(2+). 3 residues coordinate ATP: Glu282, Arg319, and Thr444. Substrate is bound at residue Arg319.

The protein belongs to the phosphoenolpyruvate carboxykinase (ATP) family. Mn(2+) serves as cofactor.

The protein localises to the cytoplasm. The enzyme catalyses oxaloacetate + ATP = phosphoenolpyruvate + ADP + CO2. It participates in carbohydrate biosynthesis; gluconeogenesis. Functionally, involved in the gluconeogenesis. Catalyzes the conversion of oxaloacetate (OAA) to phosphoenolpyruvate (PEP) through direct phosphoryl transfer between the nucleoside triphosphate and OAA. This Bacillus anthracis (strain A0248) protein is Phosphoenolpyruvate carboxykinase (ATP).